The chain runs to 475 residues: Ribulose bisphosphate carboxylase large chain (475 aa).

The residue at position 14 (lysine 14) is an N6,N6,N6-trimethyllysine. Residues asparagine 123 and threonine 173 each coordinate substrate. Catalysis depends on lysine 175, which acts as the Proton acceptor. Residue lysine 177 participates in substrate binding. 3 residues coordinate Mg(2+): lysine 201, aspartate 203, and glutamate 204. Lysine 201 is modified (N6-carboxylysine). Histidine 294 acts as the Proton acceptor in catalysis. Substrate is bound by residues arginine 295, histidine 327, and serine 379.

It belongs to the RuBisCO large chain family. Type I subfamily. In terms of assembly, heterohexadecamer of 8 large chains and 8 small chains; disulfide-linked. The disulfide link is formed within the large subunit homodimers. The cofactor is Mg(2+). Post-translationally, the disulfide bond which can form in the large chain dimeric partners within the hexadecamer appears to be associated with oxidative stress and protein turnover.

The protein localises to the plastid. The catalysed reaction is 2 (2R)-3-phosphoglycerate + 2 H(+) = D-ribulose 1,5-bisphosphate + CO2 + H2O. It carries out the reaction D-ribulose 1,5-bisphosphate + O2 = 2-phosphoglycolate + (2R)-3-phosphoglycerate + 2 H(+). In terms of biological role, ruBisCO catalyzes two reactions: the carboxylation of D-ribulose 1,5-bisphosphate, the primary event in carbon dioxide fixation, as well as the oxidative fragmentation of the pentose substrate in the photorespiration process. Both reactions occur simultaneously and in competition at the same active site. The protein is Ribulose bisphosphate carboxylase large chain (rbcL) of Euglena longa (Euglenophycean alga).